Here is an 82-residue protein sequence, read N- to C-terminus: Precursor of CEP3 (82 aa).

The signal sequence occupies residues 1 to 24 (MATINVYVFAFIFLLTISVGSIEG). Residues 25–63 (RKLTKFTVTTSEEIRAGGSVLSSSPPTEPLESPPSHGVD) constitute a propeptide that is removed on maturation. The disordered stretch occupies residues 40–82 (AGGSVLSSSPPTEPLESPPSHGVDTFRPTEPGHSPGIGHSVHN). Hydroxyproline is present on residues Pro-67, Pro-70, and Pro-74. Positions 79–82 (SVHN) are excised as a propeptide.

This sequence belongs to the C-terminally encoded plant signaling peptide (CEP) family. As to quaternary structure, interacts with the CEP receptor CEPR1. In terms of processing, the mature small signaling peptide is generated by proteolytic processing of the longer precursor. As to expression, mostly expressed in roots. Present in lateral roots (especially in vasculature), root-hypocotyl junction and cotyledons.

The protein localises to the secreted. It is found in the extracellular space. It localises to the apoplast. In terms of biological role, extracellular signaling peptide that represses primary root growth rate and significantly inhibits lateral root formation. Promotes shoot growth. Modulates leaf morphology. Regulates systemic nitrogen (N)-demand signaling. Mediates systemic up-regulation of genes involved in N uptake and assimilation pathways. This is Precursor of CEP3 from Arabidopsis thaliana (Mouse-ear cress).